The sequence spans 173 residues: Urease accessory protein UreE (173 aa).

The interval 136 to 173 is disordered; it reads PEGGAYAGSGQDHHDHSHGEHTQGEHTHDEAAEPHHHG. Residues 146–173 show a composition bias toward basic and acidic residues; sequence QDHHDHSHGEHTQGEHTHDEAAEPHHHG.

Belongs to the UreE family.

Its subcellular location is the cytoplasm. Its function is as follows. Involved in urease metallocenter assembly. Binds nickel. Probably functions as a nickel donor during metallocenter assembly. This Beijerinckia indica subsp. indica (strain ATCC 9039 / DSM 1715 / NCIMB 8712) protein is Urease accessory protein UreE.